Reading from the N-terminus, the 130-residue chain is Small ribosomal subunit protein uS9 (130 aa).

Belongs to the universal ribosomal protein uS9 family.

In Anoxybacillus flavithermus (strain DSM 21510 / WK1), this protein is Small ribosomal subunit protein uS9.